The sequence spans 657 residues: tRNA 5-methylaminomethyl-2-thiouridine biosynthesis bifunctional protein MnmC (657 aa).

Positions Met1–Arg233 are tRNA (mnm(5)s(2)U34)-methyltransferase. The segment at Ile257–Gly657 is FAD-dependent cmnm(5)s(2)U34 oxidoreductase.

It in the N-terminal section; belongs to the methyltransferase superfamily. tRNA (mnm(5)s(2)U34)-methyltransferase family. In the C-terminal section; belongs to the DAO family. FAD is required as a cofactor.

The protein localises to the cytoplasm. It catalyses the reaction 5-aminomethyl-2-thiouridine(34) in tRNA + S-adenosyl-L-methionine = 5-methylaminomethyl-2-thiouridine(34) in tRNA + S-adenosyl-L-homocysteine + H(+). Functionally, catalyzes the last two steps in the biosynthesis of 5-methylaminomethyl-2-thiouridine (mnm(5)s(2)U) at the wobble position (U34) in tRNA. Catalyzes the FAD-dependent demodification of cmnm(5)s(2)U34 to nm(5)s(2)U34, followed by the transfer of a methyl group from S-adenosyl-L-methionine to nm(5)s(2)U34, to form mnm(5)s(2)U34. The protein is tRNA 5-methylaminomethyl-2-thiouridine biosynthesis bifunctional protein MnmC of Cupriavidus necator (strain ATCC 17699 / DSM 428 / KCTC 22496 / NCIMB 10442 / H16 / Stanier 337) (Ralstonia eutropha).